The sequence spans 398 residues: MAKLTVKDVDLKGKKVLVRVDFNVPLKDGVITNDNRITAALPTIKYIIEQGGRAILFSHLGRVKEEADKEGKSLAPVAADLAAKLGQDVVFPGVTRGAKLEEAINALEDGQVLLVENTRFEDVDGKKESKNDEELGKYWASLGDGIFVNDAFGTAHRAHASNVGISANVEKAVAGFLLENEIAYIQEAVETPERPFVAILGGSKVSDKIGVIENLLEKADKVLIGGGMTYTFYKAQGIEIGNSLVEEDKLDVAKDLLEKSNGKLILPVDSKEANAFAGYTEVRDTEGEAVSEGFLGLDIGPKSIAKFDEALTGAKTVVWNGPMGVFENPDFQAGTIGVMDAIVKQPGVKSIIGGGDSAAAAINLGRADKFSWISTGGGASMELLEGKVLPGLAALTEK.

Residues 21–23 (DFN), R36, 59–62 (HLGR), R119, and R157 each bind substrate. ATP is bound by residues K208, G296, E327, and 354 to 357 (GGDS).

This sequence belongs to the phosphoglycerate kinase family. In terms of assembly, monomer.

The protein localises to the cytoplasm. The enzyme catalyses (2R)-3-phosphoglycerate + ATP = (2R)-3-phospho-glyceroyl phosphate + ADP. It functions in the pathway carbohydrate degradation; glycolysis; pyruvate from D-glyceraldehyde 3-phosphate: step 2/5. The polypeptide is Phosphoglycerate kinase (Streptococcus agalactiae serotype Ia (strain ATCC 27591 / A909 / CDC SS700)).